Here is a 338-residue protein sequence, read N- to C-terminus: uncharacterized protein (338 aa).

A disordered region spans residues 1–20 (MYNNNQNHHNNDNNMNKDEP). Positions 9–20 (HNNDNNMNKDEP) are enriched in basic and acidic residues. N-linked (GlcNAc...) asparagine glycans are attached at residues N37, N83, N97, N105, N114, and N122. The disordered stretch occupies residues 55–92 (VNSGNNNNNNNNNNNNNNNNNNNNNNNNNDSIVINMDT). Residues 59-92 (NNNNNNNNNNNNNNNNNNNNNNNNNDSIVINMDT) are compositionally biased toward low complexity. 3 helical membrane-spanning segments follow: residues 148–168 (YKKF…IVLI), 178–198 (FHAY…FLLI), and 202–222 (ILSI…FLKV). N-linked (GlcNAc...) asparagine glycans are attached at residues N229, N240, N286, N302, N317, and N322. 2 disordered regions span residues 279-303 (SNLN…NSNS) and 316-338 (LNSS…TNEE). Low complexity predominate over residues 280–294 (NLNRNNNNSNNVNNN). Low complexity predominate over residues 316–327 (LNSSGSNSSIYS). The span at 328 to 338 (DVQNDIGTNEE) shows a compositional bias: polar residues.

The protein resides in the membrane. This is an uncharacterized protein from Dictyostelium discoideum (Social amoeba).